The following is a 273-amino-acid chain: Putative esterase/lipase 3 (273 aa).

His34 is a catalytic residue. Ser100 (charge relay system) is an active-site residue.

This sequence belongs to the lipase/esterase LIP3/BchO family.

In Mycoplasma genitalium (strain ATCC 33530 / DSM 19775 / NCTC 10195 / G37) (Mycoplasmoides genitalium), this protein is Putative esterase/lipase 3.